The sequence spans 203 residues: uncharacterized protein (203 aa).

This sequence belongs to the DadA oxidoreductase family.

Its function is as follows. Either a functional dehydrogenase or a non-functional fragment. This is an uncharacterized protein from Sinorhizobium fredii (strain NBRC 101917 / NGR234).